The chain runs to 393 residues: Homogentisate phytyltransferase 1, chloroplastic (393 aa).

A chloroplast-targeting transit peptide spans 1 to 36; that stretch reads MESLLSSSSLVSAAGGFCWKKQNLKLHSLSEIRVLR. 9 helical membrane-spanning segments follow: residues 108–128, 133–153, 170–190, 205–227, 232–252, 271–291, 314–334, 338–358, and 371–391; these read TVIG…EKVS, LLFT…IYIV, YLPL…VASF, PLFW…LPLL, FALV…QIAF, LIFA…FKDI, VFWT…LVGA, FIWS…TLWA, and ITSC…LLPF.

The protein belongs to the UbiA prenyltransferase family.

The protein localises to the plastid. The protein resides in the chloroplast membrane. The enzyme catalyses phytyl diphosphate + homogentisate + H(+) = 2-methyl-6-phytyl-1,4-benzene-1,4-diol + CO2 + diphosphate. It functions in the pathway cofactor biosynthesis; tocopherol biosynthesis. Functionally, involved in the synthesis of tocopherol (vitamin E). Catalyzes the condensation of homogentisate and phytyl diphosphate to form dimethylphytylhydrquinone. Low activity with geranylgeranyl diphosphate as substrate, but no activity with farnesyl diphosphate or solanesyl diphosphate. Tocopherol functions to limit lipid oxidation during seed desiccation, quiescence and germination and early seedling development. Protects thylakoid membrane lipids from photooxidation and is required for low-temperature adaptation. In Arabidopsis thaliana (Mouse-ear cress), this protein is Homogentisate phytyltransferase 1, chloroplastic (HPT1).